The following is a 65-amino-acid chain: Large ribosomal subunit protein bL35 (65 aa).

The disordered stretch occupies residues 1 to 65 (MPKIKTNRAA…GRLDRMLPYL (65 aa)). The segment covering 10-44 (AAKRFRKTASGKYKAGHANRSHILTKKATKRKRNL) has biased composition (basic residues). The span at 50–65 (VRAEDAGRLDRMLPYL) shows a compositional bias: basic and acidic residues.

It belongs to the bacterial ribosomal protein bL35 family.

This chain is Large ribosomal subunit protein bL35, found in Xylella fastidiosa (strain M23).